The sequence spans 497 residues: Serine/threonine-protein phosphatase 2A 56 kDa regulatory subunit beta isoform (497 aa).

The span at 1 to 19 (METKLPPASTPTSPSSPGL) shows a compositional bias: low complexity. 2 disordered regions span residues 1–55 (METK…YQSN) and 473–497 (QGTQ…GGQS). 6 positions are modified to phosphoserine: S32, S35, S44, S46, S47, and S48. The segment covering 34–45 (RSLRRARPRRSH) has biased composition (basic residues).

This sequence belongs to the phosphatase 2A regulatory subunit B56 family. As to quaternary structure, component of the serine/threonine-protein phosphatase 2A complex (PP2A). This complex consists of a common heterodimeric core enzyme, composed of a 36 kDa catalytic subunit (subunit C) and a 65 kDa constant scaffold subunit (PR65 or subunit A), that associates with a variety of regulatory subunits. Proteins that associate with the core dimer include three families of regulatory subunits B (the R2/B/PR55/B55, R3/B''/PR72/PR130/PR59 and R5/B'/B56 families), the 48 kDa variable regulatory subunit, viral proteins, and cell signaling molecules. Interacts with SGO1. Interacts with AKT1. In terms of processing, ubiquitinated by CUL3-KLHL15 complex; this modification leads to proteasomal degradation.

The protein resides in the cytoplasm. In terms of biological role, as the regulatory component of the serine/threonine-protein phosphatase 2A (PP2A) holoenzyme, modulates substrate specificity, subcellular localization, and responsiveness to phosphorylation. The phosphorylated form mediates the interaction between PP2A and AKT1, leading to AKT1 dephosphorylation. In Mus musculus (Mouse), this protein is Serine/threonine-protein phosphatase 2A 56 kDa regulatory subunit beta isoform (Ppp2r5b).